We begin with the raw amino-acid sequence, 365 residues long: MGKKNRKGKENNAAKTSFLKVENIKNTNSGLELPSQDYTNVEEKESSPKTDFPLITKEHVNTKTDSNILDYPTIGDLVSSVEKLCVLKELKIAFPEVDDTLIKAILIASQGVLEPAFNSLLYYSSPEENTDFALPMKPISVEDYSKINVSEILQREIFDDIEDEFSGQGINGSMVISKIESELSSLAEHIGNISTPGSNREVAESTRNVAVAEGHNTILSNEDSILKGKEKGKEEEKEKGEEKGVNSLKGAAVKVVAKSLKNNRIPVTVKRNEPSNNLFDVLNCDESEEEEEQDVETNTSNQERKNQGGNTEVPEAQRDSADRLPAKDDGGYKSAFGTDSCGLFAADAKDEKKQVHPSRQELSFT.

The tract at residues 28–49 is disordered; the sequence is NSGLELPSQDYTNVEEKESSPK. The CUE domain maps to 82-125; sequence EKLCVLKELKIAFPEVDDTLIKAILIASQGVLEPAFNSLLYYSS. 2 disordered regions span residues 215–246 and 286–335; these read HNTILSNEDSILKGKEKGKEEEKEKGEEKGVN and ESEE…YKSA. Basic and acidic residues predominate over residues 224–244; it reads SILKGKEKGKEEEKEKGEEKG. Residues 286 to 295 show a composition bias toward acidic residues; sequence ESEEEEEQDV. Positions 315–331 are enriched in basic and acidic residues; sequence EAQRDSADRLPAKDDGG.

May interact directly with ADY3. Probable component of a spindle pole body (SPB) complex composed of ADY3, SSP1, DON1, MPC54, SPO21/MPC70, NUD1 and CNM67.

The protein localises to the prospore membrane. In terms of biological role, involved in the pathway that organizes the prospore membrane (PSM) during sporulation. This chain is Donuts protein 1 (DON1), found in Saccharomyces cerevisiae (strain ATCC 204508 / S288c) (Baker's yeast).